A 341-amino-acid polypeptide reads, in one-letter code: tRNA N6-adenosine threonylcarbamoyltransferase (341 aa).

Residues H111 and H115 each contribute to the Fe cation site. Substrate-binding positions include 134 to 138 (LVSGG), D167, G180, and N276. Residue D304 participates in Fe cation binding.

Belongs to the KAE1 / TsaD family. The cofactor is Fe(2+).

The protein localises to the cytoplasm. The catalysed reaction is L-threonylcarbamoyladenylate + adenosine(37) in tRNA = N(6)-L-threonylcarbamoyladenosine(37) in tRNA + AMP + H(+). Required for the formation of a threonylcarbamoyl group on adenosine at position 37 (t(6)A37) in tRNAs that read codons beginning with adenine. Is involved in the transfer of the threonylcarbamoyl moiety of threonylcarbamoyl-AMP (TC-AMP) to the N6 group of A37, together with TsaE and TsaB. TsaD likely plays a direct catalytic role in this reaction. The polypeptide is tRNA N6-adenosine threonylcarbamoyltransferase (Pseudomonas aeruginosa (strain LESB58)).